A 262-amino-acid chain; its full sequence is NADPH-dependent 7-cyano-7-deazaguanine reductase (262 aa).

69 to 71 serves as a coordination point for substrate; sequence IES. 71–72 contributes to the NADPH binding site; it reads SK. Catalysis depends on Cys-170, which acts as the Thioimide intermediate. Asp-177 functions as the Proton donor in the catalytic mechanism. 209–210 is a substrate binding site; that stretch reads HE. 238–239 provides a ligand contact to NADPH; sequence RG.

It belongs to the GTP cyclohydrolase I family. QueF type 2 subfamily. In terms of assembly, homodimer.

It localises to the cytoplasm. It carries out the reaction 7-aminomethyl-7-carbaguanine + 2 NADP(+) = 7-cyano-7-deazaguanine + 2 NADPH + 3 H(+). It functions in the pathway tRNA modification; tRNA-queuosine biosynthesis. Catalyzes the NADPH-dependent reduction of 7-cyano-7-deazaguanine (preQ0) to 7-aminomethyl-7-deazaguanine (preQ1). The chain is NADPH-dependent 7-cyano-7-deazaguanine reductase from Buchnera aphidicola subsp. Schizaphis graminum (strain Sg).